A 167-amino-acid chain; its full sequence is Novel acetylcholine receptor chaperone (167 aa).

Residues 1 to 5 (MASPR) lie on the Cytoplasmic side of the membrane. A helical transmembrane segment spans residues 6–26 (TITIMALSVALGLFFVFMGTI). Over 27–61 (KLTPRLSKDAYSEMKRAYKSYVRALPLLKKMGINS) the chain is Lumenal. Residues 43-54 (AYKSYVRALPLL) form an interaction with NGFR region. A helical transmembrane segment spans residues 62–82 (ILLRKSIGALEVACGIVMTLV). The Cytoplasmic portion of the chain corresponds to 83–88 (PGRPKD). Residues 89–109 (VANFFLLLLVLAVLFFHQLVG) form a helical membrane-spanning segment. The Lumenal segment spans residues 110 to 114 (DPLKR). The chain crosses the membrane as a helical span at residues 115-132 (YAHALVFGILLTCRLLIA). The Cytoplasmic segment spans residues 133–167 (RKPEDRSSEKKALPESAEEQPSLYEKAPQGKVKVS). Over residues 135 to 145 (PEDRSSEKKAL) the composition is skewed to basic and acidic residues. The disordered stretch occupies residues 135 to 167 (PEDRSSEKKALPESAEEQPSLYEKAPQGKVKVS).

Belongs to the DoxX family. May interact with NGFR. Interacts with RPN1, RPN2 and CANX. Brain (at protein level). Expressed in the spinal cord dorsal horn (at protein level).

The protein resides in the peroxisome membrane. It localises to the cytoplasmic vesicle. Its subcellular location is the endoplasmic reticulum membrane. Functionally, molecular chaperone which mediates the proper assembly and functional expression of the nicotinic acetylcholine receptors (nAChRs) throughout the brain. Essential for the proper folding, assembly, function and surface trafficking of alpha-7 (CHRNA7), alpha-4-beta-2, alpha-3-beta-2 and alpha-3-beta-4 receptors. Stably associates with ribophorin-1 (RPN1) and ribophorin-2 (RPN2) (components of the oligosaccharyl transferase (OST) complex) and with calnexin (CANX), both of which are critical for NACHO-mediated effects on CHRNA7 assembly and function. Facilitates the proper folding and assembly of alpha-6-beta-2 and alpha-6-beta-2-beta-3 receptors and acts at early stages of the nAChRs subunit assembly. Promotes the expression of the alpha-4(2):beta-2(3) stoichiometric form over the alpha-4(3):beta-2(2) form. This is Novel acetylcholine receptor chaperone from Mus musculus (Mouse).